The following is a 443-amino-acid chain: 3-isopropylmalate dehydratase large subunit (443 aa).

The [4Fe-4S] cluster site is built by cysteine 347, cysteine 407, and cysteine 410.

Belongs to the aconitase/IPM isomerase family. LeuC type 1 subfamily. Heterodimer of LeuC and LeuD. The cofactor is [4Fe-4S] cluster.

The catalysed reaction is (2R,3S)-3-isopropylmalate = (2S)-2-isopropylmalate. Its pathway is amino-acid biosynthesis; L-leucine biosynthesis; L-leucine from 3-methyl-2-oxobutanoate: step 2/4. In terms of biological role, catalyzes the isomerization between 2-isopropylmalate and 3-isopropylmalate, via the formation of 2-isopropylmaleate. This Buchnera aphidicola subsp. Uroleucon obscurum protein is 3-isopropylmalate dehydratase large subunit.